Consider the following 458-residue polypeptide: UDP-N-acetylmuramoylalanine--D-glutamate ligase (458 aa).

118 to 124 (GTNGKTT) serves as a coordination point for ATP.

The protein belongs to the MurCDEF family.

It is found in the cytoplasm. It catalyses the reaction UDP-N-acetyl-alpha-D-muramoyl-L-alanine + D-glutamate + ATP = UDP-N-acetyl-alpha-D-muramoyl-L-alanyl-D-glutamate + ADP + phosphate + H(+). Its pathway is cell wall biogenesis; peptidoglycan biosynthesis. Its function is as follows. Cell wall formation. Catalyzes the addition of glutamate to the nucleotide precursor UDP-N-acetylmuramoyl-L-alanine (UMA). The polypeptide is UDP-N-acetylmuramoylalanine--D-glutamate ligase (Ligilactobacillus salivarius (strain UCC118) (Lactobacillus salivarius)).